Here is a 304-residue protein sequence, read N- to C-terminus: tRNA dimethylallyltransferase (304 aa).

8–15 is an ATP binding site; that stretch reads GPTASGKS. 10 to 15 is a binding site for substrate; the sequence is TASGKS. An interaction with substrate tRNA region spans residues 33–36; it reads DSRQ.

Belongs to the IPP transferase family. As to quaternary structure, monomer. The cofactor is Mg(2+).

The enzyme catalyses adenosine(37) in tRNA + dimethylallyl diphosphate = N(6)-dimethylallyladenosine(37) in tRNA + diphosphate. In terms of biological role, catalyzes the transfer of a dimethylallyl group onto the adenine at position 37 in tRNAs that read codons beginning with uridine, leading to the formation of N6-(dimethylallyl)adenosine (i(6)A). The protein is tRNA dimethylallyltransferase of Chlorobium luteolum (strain DSM 273 / BCRC 81028 / 2530) (Pelodictyon luteolum).